The following is a 253-amino-acid chain: Isoprenyl transferase (253 aa).

The active site involves Asp-30. Asp-30 is a binding site for Mg(2+). Substrate is bound by residues 31-34 (GNRR), Trp-35, His-51, and 79-81 (STE). The active-site Proton acceptor is the Asn-82. Substrate contacts are provided by residues Phe-83, Arg-85, Arg-202, and 208-210 (RVS). Glu-221 contacts Mg(2+).

Belongs to the UPP synthase family. Homodimer. The cofactor is Mg(2+).

In terms of biological role, catalyzes the condensation of isopentenyl diphosphate (IPP) with allylic pyrophosphates generating different type of terpenoids. This chain is Isoprenyl transferase, found in Chlamydia trachomatis serovar D (strain ATCC VR-885 / DSM 19411 / UW-3/Cx).